We begin with the raw amino-acid sequence, 318 residues long: Ribosomal large subunit pseudouridine synthase B (318 aa).

One can recognise an S4 RNA-binding domain in the interval 3–75; sequence EKLQKILARA…VCRVLAYYKP (73 aa). Asp110 functions as the Nucleophile in the catalytic mechanism. The disordered stretch occupies residues 271–318; that stretch reads AVKRHTEVSGRQVAGRQGSARKGSTRQNVGNAAPAATASRRSGPKKRG.

Belongs to the pseudouridine synthase RsuA family.

The enzyme catalyses uridine(2605) in 23S rRNA = pseudouridine(2605) in 23S rRNA. In terms of biological role, responsible for synthesis of pseudouridine from uracil-2605 in 23S ribosomal RNA. In Yersinia pestis, this protein is Ribosomal large subunit pseudouridine synthase B (rluB).